The sequence spans 328 residues: Gonadotropin-releasing hormone receptor (328 aa).

Topologically, residues 1-38 are extracellular; sequence MANSASPEQNQNHCSAINSSILLTQGNLPTLTLSGKIR. The N-linked (GlcNAc...) asparagine glycan is linked to N18. Residues 39-58 traverse the membrane as a helical segment; sequence VTVTFFLFLLSTAFNASFLL. Topologically, residues 59–77 are cytoplasmic; sequence KLQKWTQRKEKGKKLSRMK. The chain crosses the membrane as a helical span at residues 78–97; it reads VLLKHLTLANLLETLIVMPL. Residues 98–115 lie on the Extracellular side of the membrane; that stretch reads DGMWNITVQWYAGEFLCK. N102 carries an N-linked (GlcNAc...) asparagine glycan. C114 and C196 form a disulfide bridge. The chain crosses the membrane as a helical span at residues 116–137; the sequence is VLSYLKLFSMYAPAFMMVVISL. At 138 to 164 the chain is on the cytoplasmic side; the sequence is DRSLAITRPLAVKSNSRLGRFMIGLAW. The chain crosses the membrane as a helical span at residues 165 to 184; that stretch reads LLSSIFAGPQLYIFRMIHLA. At 185–212 the chain is on the extracellular side; that stretch reads DSSGQTEGFSQCVTHGSFPQWWHQAFYN. The helical transmembrane segment at 213-232 threads the bilayer; sequence FFTFSCLFIIPLLIMLICNA. Residues 233–281 lie on the Cytoplasmic side of the membrane; sequence KIMFTLTRVLQQDPHNLQLNQSKNNIPRARLRTLKMTVAFAASFIVCWT. Residues 282–300 traverse the membrane as a helical segment; that stretch reads PYYVLGIWYWFDPEMVNRV. The Extracellular portion of the chain corresponds to 301–306; it reads SDPVNH. A helical membrane pass occupies residues 307–326; sequence FFFLFAFLNPCFDPLIYGYF. Residues 327–328 lie on the Cytoplasmic side of the membrane; it reads SL.

The protein belongs to the G-protein coupled receptor 1 family. As to expression, pituitary gland.

It localises to the cell membrane. Functionally, receptor for gonadotropin releasing hormone (GnRH) that mediates the action of GnRH to stimulate the secretion of the gonadotropic hormones luteinizing hormone (LH) and follicle-stimulating hormone (FSH). This receptor mediates its action by association with G-proteins that activate a phosphatidylinositol-calcium second messenger system. The chain is Gonadotropin-releasing hormone receptor (GNRHR) from Sus scrofa (Pig).